The primary structure comprises 280 residues: Formyltetrahydrofolate deformylase (280 aa).

The 79-residue stretch at 8–86 (VLRTICPDQK…RELNPAGRRR (79 aa)) folds into the ACT domain. Asp-225 is an active-site residue.

Belongs to the PurU family. As to quaternary structure, homohexamer.

The enzyme catalyses (6R)-10-formyltetrahydrofolate + H2O = (6S)-5,6,7,8-tetrahydrofolate + formate + H(+). It functions in the pathway purine metabolism; IMP biosynthesis via de novo pathway; formate from 10-formyl-5,6,7,8-tetrahydrofolate: step 1/1. With respect to regulation, activated by methionine, inhibited by glycine. Catalyzes the hydrolysis of 10-formyltetrahydrofolate (formyl-FH4) to formate and tetrahydrofolate (FH4). Provides the major source of formate for the PurT-dependent synthesis of 5'-phosphoribosyl-N-formylglycinamide (FGAR) during aerobic growth. Has a role in regulating the one-carbon pool. In Escherichia coli (strain K12), this protein is Formyltetrahydrofolate deformylase.